We begin with the raw amino-acid sequence, 627 residues long: Phosphomethylpyrimidine synthase (627 aa).

The segment covering 1–21 (MSAQQQKNLSESAQVDQQSVQ) has biased composition (polar residues). The disordered stretch occupies residues 1–32 (MSAQQQKNLSESAQVDQQSVQPFPRSQKVYVQ). Residues Asn-231, Met-260, Tyr-289, His-325, 345–347 (SRG), 386–389 (DGLR), and Glu-425 each bind substrate. His-429 contributes to the Zn(2+) binding site. Tyr-452 contacts substrate. Residue His-493 participates in Zn(2+) binding. Cys-573, Cys-576, and Cys-581 together coordinate [4Fe-4S] cluster.

This sequence belongs to the ThiC family. In terms of assembly, homodimer. [4Fe-4S] cluster is required as a cofactor.

The enzyme catalyses 5-amino-1-(5-phospho-beta-D-ribosyl)imidazole + S-adenosyl-L-methionine = 4-amino-2-methyl-5-(phosphooxymethyl)pyrimidine + CO + 5'-deoxyadenosine + formate + L-methionine + 3 H(+). Its pathway is cofactor biosynthesis; thiamine diphosphate biosynthesis. Functionally, catalyzes the synthesis of the hydroxymethylpyrimidine phosphate (HMP-P) moiety of thiamine from aminoimidazole ribotide (AIR) in a radical S-adenosyl-L-methionine (SAM)-dependent reaction. The protein is Phosphomethylpyrimidine synthase of Ectopseudomonas mendocina (strain ymp) (Pseudomonas mendocina).